A 93-amino-acid polypeptide reads, in one-letter code: DNA-directed RNA polymerase subunit omega (93 aa).

It belongs to the RNA polymerase subunit omega family. In terms of assembly, the RNAP catalytic core consists of 2 alpha, 1 beta, 1 beta' and 1 omega subunit. When a sigma factor is associated with the core the holoenzyme is formed, which can initiate transcription.

It carries out the reaction RNA(n) + a ribonucleoside 5'-triphosphate = RNA(n+1) + diphosphate. Promotes RNA polymerase assembly. Latches the N- and C-terminal regions of the beta' subunit thereby facilitating its interaction with the beta and alpha subunits. This is DNA-directed RNA polymerase subunit omega from Actinobacillus pleuropneumoniae serotype 3 (strain JL03).